The chain runs to 316 residues: Transaldolase A (316 aa).

The Schiff-base intermediate with substrate role is filled by Lys-131.

The protein belongs to the transaldolase family. Type 1 subfamily. As to quaternary structure, homodimer.

Its subcellular location is the cytoplasm. It carries out the reaction D-sedoheptulose 7-phosphate + D-glyceraldehyde 3-phosphate = D-erythrose 4-phosphate + beta-D-fructose 6-phosphate. The protein operates within carbohydrate degradation; pentose phosphate pathway; D-glyceraldehyde 3-phosphate and beta-D-fructose 6-phosphate from D-ribose 5-phosphate and D-xylulose 5-phosphate (non-oxidative stage): step 2/3. Transaldolase is important for the balance of metabolites in the pentose-phosphate pathway. The sequence is that of Transaldolase A (talA) from Escherichia coli O157:H7.